Reading from the N-terminus, the 189-residue chain is MQGFFWKTWLVVALCGTSSSLAHRPLSYGEALELALSIYNSKAGEESLFRLLEAVPQPEWDPLSEGSQQLNFTIKETVCQVEEERPLEECGFQEDGVVLECTGYYFFGETPPVVVLTCVPVGGVEEEEEDEEEQKAEVEKDEEKEDEEKDRPKRVKRFKKFFKKLKNSVKKRVKKFFRKPRVIGVTFPF.

A signal peptide spans 1-22 (MQGFFWKTWLVVALCGTSSSLA). A propeptide spanning residues 23–155 (HRPLSYGEAL…DEEKDRPKRV (133 aa)) is cleaved from the precursor. 2 cysteine pairs are disulfide-bonded: Cys-79/Cys-90 and Cys-101/Cys-118. Acidic residues predominate over residues 125 to 148 (EEEEEDEEEQKAEVEKDEEKEDEE). Positions 125–152 (EEEEEDEEEQKAEVEKDEEKEDEEKDRP) are disordered.

Belongs to the cathelicidin family. Expressed by the venom gland.

Its subcellular location is the secreted. The protein resides in the target cell membrane. Functionally, potent antimicrobial peptide against Gram-negative (MIC=0.25 ug/ml against E.coli ATCC 25922, MIC=1 ug/ml against P.aeruginosa) and Gram-positive bacteria (MIC=32 ug/ml against E.faecalis, MIC=32 ug/ml against S.aureus). Adopts an amphipathic alpha helical conformation, that may allow to partition into the target membrane. Low hemolytic activities have been observed on mammalian cells. In addition, when tested in vitro on the parasite Trypanosoma cruzi (responsible of the Chagas disease), is able to reduce the number of the three forms (epimastigote, trypomastigote and amastigote) by inducing cell death through necrosis. The polypeptide is Batroxicidin (Bothrops atrox (Barba amarilla)).